Here is a 179-residue protein sequence, read N- to C-terminus: Endoribonuclease YbeY (179 aa).

Zn(2+) is bound by residues H148, H152, and H158.

It belongs to the endoribonuclease YbeY family. Requires Zn(2+) as cofactor.

The protein resides in the cytoplasm. Single strand-specific metallo-endoribonuclease involved in late-stage 70S ribosome quality control and in maturation of the 3' terminus of the 16S rRNA. This chain is Endoribonuclease YbeY, found in Prochlorococcus marinus (strain MIT 9312).